The chain runs to 880 residues: Translation initiation factor IF-2 (880 aa).

Positions 143 to 228 (EAEAKAKAKA…EAERNGDHHI (86 aa)) are enriched in basic and acidic residues. The interval 143–289 (EAEAKAKAKA…APESMAHGFN (147 aa)) is disordered. Basic residues predominate over residues 249-262 (GRRARNKSNAKKRG). The 170-residue stretch at 380–549 (SRAPVVTIMG…LLQAEVLELK (170 aa)) folds into the tr-type G domain. The tract at residues 389–396 (GHVDHGKT) is G1. 389–396 (GHVDHGKT) contacts GTP. The G2 stretch occupies residues 414-418 (GITQH). Positions 435–438 (DTPG) are G3. GTP contacts are provided by residues 435–439 (DTPGH) and 489–492 (NKMD). The tract at residues 489-492 (NKMD) is G4. Residues 525-527 (SAK) form a G5 region.

The protein belongs to the TRAFAC class translation factor GTPase superfamily. Classic translation factor GTPase family. IF-2 subfamily.

It is found in the cytoplasm. In terms of biological role, one of the essential components for the initiation of protein synthesis. Protects formylmethionyl-tRNA from spontaneous hydrolysis and promotes its binding to the 30S ribosomal subunits. Also involved in the hydrolysis of GTP during the formation of the 70S ribosomal complex. In Shewanella putrefaciens (strain CN-32 / ATCC BAA-453), this protein is Translation initiation factor IF-2.